The following is a 342-amino-acid chain: Fructose-1,6-bisphosphatase class 1 (342 aa).

Mg(2+) contacts are provided by E91, D113, L115, and D116. Substrate is bound by residues 116–119 (DGSS), N211, and K277. Residue E283 coordinates Mg(2+).

Belongs to the FBPase class 1 family. Homotetramer. The cofactor is Mg(2+).

It localises to the cytoplasm. It carries out the reaction beta-D-fructose 1,6-bisphosphate + H2O = beta-D-fructose 6-phosphate + phosphate. Its pathway is carbohydrate biosynthesis; gluconeogenesis. The chain is Fructose-1,6-bisphosphatase class 1 from Bordetella petrii (strain ATCC BAA-461 / DSM 12804 / CCUG 43448).